A 139-amino-acid polypeptide reads, in one-letter code: Putative lipoprotein LpqV (139 aa).

The first 25 residues, 1–25 (MRPSRYAPLLCAMVLALAWLSAVAG), serve as a signal peptide directing secretion. The N-palmitoyl cysteine moiety is linked to residue Cys26. A lipid anchor (S-diacylglycerol cysteine) is attached at Cys26.

It localises to the cell membrane. This chain is Putative lipoprotein LpqV (lpqV), found in Mycobacterium bovis (strain ATCC BAA-935 / AF2122/97).